The sequence spans 130 residues: uncharacterized protein (130 aa).

Over 1–58 (MREQLKLFTREIVDFTFLILSGFDYYQTLLISSNSSKKRPKDSSLLSEKKKKKKKKKK) the chain is Cytoplasmic. The tract at residues 34-57 (NSSKKRPKDSSLLSEKKKKKKKKK) is disordered. A helical membrane pass occupies residues 59–79 (DVLSYLSYLKDLPFVPFLFWQ). Topologically, residues 80–94 (PGYSQREKNPRQHSL) are extracellular. A helical membrane pass occupies residues 95–115 (FIMTITKPGMISMADMNYVVS). At 116–130 (KNRSLNRPAERGGNR) the chain is on the cytoplasmic side.

It localises to the membrane. This is an uncharacterized protein from Saccharomyces cerevisiae (strain ATCC 204508 / S288c) (Baker's yeast).